The following is a 252-amino-acid chain: NAD-dependent protein deacetylase (252 aa).

The 248-residue stretch at M1–L248 folds into the Deacetylase sirtuin-type domain. Residues A26, T30, F37, R38, Q102, V104, D105, and H120 each contribute to the NAD(+) site. A nicotinamide-binding site is contributed by F37. Nicotinamide is bound by residues V104 and D105. Residue H120 is the Proton acceptor of the active site. Positions 128, 131, 153, and 155 each coordinate Zn(2+). S191, S192, N216, and I234 together coordinate NAD(+).

Belongs to the sirtuin family. Class U subfamily. Zn(2+) is required as a cofactor.

It is found in the cytoplasm. The catalysed reaction is N(6)-acetyl-L-lysyl-[protein] + NAD(+) + H2O = 2''-O-acetyl-ADP-D-ribose + nicotinamide + L-lysyl-[protein]. NAD-dependent protein deacetylase which modulates the activities of several enzymes which are inactive in their acetylated form. Deacetylates the N-terminal lysine residue of Alba, the major archaeal chromatin protein and that, in turn, increases Alba's DNA binding affinity, thereby repressing transcription. The sequence is that of NAD-dependent protein deacetylase from Sulfolobus acidocaldarius (strain ATCC 33909 / DSM 639 / JCM 8929 / NBRC 15157 / NCIMB 11770).